The sequence spans 648 residues: Bifunctional protein TilS/HprT (648 aa).

An ATP-binding site is contributed by 29–34 (SGGPDS). A Mg(2+)-binding site is contributed by aspartate 627.

The protein in the N-terminal section; belongs to the tRNA(Ile)-lysidine synthase family. In the C-terminal section; belongs to the purine/pyrimidine phosphoribosyltransferase family. Requires Mg(2+) as cofactor.

The protein resides in the cytoplasm. The enzyme catalyses IMP + diphosphate = hypoxanthine + 5-phospho-alpha-D-ribose 1-diphosphate. It carries out the reaction GMP + diphosphate = guanine + 5-phospho-alpha-D-ribose 1-diphosphate. The catalysed reaction is cytidine(34) in tRNA(Ile2) + L-lysine + ATP = lysidine(34) in tRNA(Ile2) + AMP + diphosphate + H(+). Its function is as follows. Ligates lysine onto the cytidine present at position 34 of the AUA codon-specific tRNA(Ile) that contains the anticodon CAU, in an ATP-dependent manner. Cytidine is converted to lysidine, thus changing the amino acid specificity of the tRNA from methionine to isoleucine. This is Bifunctional protein TilS/HprT (tilS/hprT) from Listeria monocytogenes serovar 1/2a (strain ATCC BAA-679 / EGD-e).